Consider the following 559-residue polypeptide: Actin-binding protein WASF1 (559 aa).

3 disordered regions span residues 169-202, 307-400, and 412-492; these read TEDKRKEKRKQKQKNLDRPHEPEKVPRAPHDRRR, RPQS…SPPV, and VHPL…STLP. The segment covering 182 to 202 has biased composition (basic and acidic residues); it reads KNLDRPHEPEKVPRAPHDRRR. Residues 322 to 332 show a composition bias toward pro residues; the sequence is PTPPPPPPPLP. Positions 333–346 are enriched in low complexity; it reads SALSTSSLRASMTS. At arginine 341 the chain carries Asymmetric dimethylarginine; alternate. The residue at position 341 (arginine 341) is an Omega-N-methylarginine; alternate. Composition is skewed to pro residues over residues 347–374, 384–399, 423–437, and 458–477; these read TPPPPVPPPPPPPAPALQAPAVPPPPAP, PAPPPIAPPLVQPSPP, LPPPPPPPPLPPPGI, and TPSPAPGPHAPLMPPSPPSQ. Serine 489 bears the Phosphoserine mark. The WH2 domain maps to 497-514; the sequence is ARSVLLEAIRKGIQLRKV.

It belongs to the SCAR/WAVE family. As to quaternary structure, component of the WAVE1 complex composed of ABI2, CYFIP1 or CYFIP2, BRK1, NCKAP1 and WASF1/WAVE1. Within the complex, a heterodimer containing NCKAP1 and CYFIP1 interacts with a heterotrimer formed by WAVE1, ABI2 and BRK1. CYFIP2 binds to activated RAC1 which causes the complex to dissociate, releasing activated WASF1. The complex can also be activated by NCK1. Binds actin and the Arp2/3 complex. Interacts with BAIAP2. Interacts with SHANK3; the interaction mediates the association of SHANK3 with the WAVE1 complex. Interacts with ABI1 (via N-terminus). Interacts with SORBS2; this interaction greatly enhances phosphorylation by ABL1 and dephosphorylation by PTPN12 and might mediate partial to focal adhesion sites. In terms of tissue distribution, expressed in hippocampal neurons (at protein level).

Its subcellular location is the cytoplasm. It is found in the cytoskeleton. The protein localises to the synapse. The protein resides in the cell junction. It localises to the focal adhesion. Downstream effector molecule involved in the transmission of signals from tyrosine kinase receptors and small GTPases to the actin cytoskeleton. Promotes formation of actin filaments. Part of the WAVE complex that regulates lamellipodia formation. The WAVE complex regulates actin filament reorganization via its interaction with the Arp2/3 complex. As component of the WAVE1 complex, required for BDNF-NTRK2 endocytic trafficking and signaling from early endosomes. Also involved in the regulation of mitochondrial dynamics. This chain is Actin-binding protein WASF1 (Wasf1), found in Rattus norvegicus (Rat).